Consider the following 115-residue polypeptide: Large ribosomal subunit protein bL20 (115 aa).

The protein belongs to the bacterial ribosomal protein bL20 family.

Binds directly to 23S ribosomal RNA and is necessary for the in vitro assembly process of the 50S ribosomal subunit. It is not involved in the protein synthesizing functions of that subunit. This is Large ribosomal subunit protein bL20 from Prochlorococcus marinus (strain NATL2A).